A 324-amino-acid polypeptide reads, in one-letter code: Methionyl-tRNA formyltransferase (324 aa).

Residue 114 to 117 coordinates (6S)-5,6,7,8-tetrahydrofolate; the sequence is SLLP.

This sequence belongs to the Fmt family.

The catalysed reaction is L-methionyl-tRNA(fMet) + (6R)-10-formyltetrahydrofolate = N-formyl-L-methionyl-tRNA(fMet) + (6S)-5,6,7,8-tetrahydrofolate + H(+). Its function is as follows. Attaches a formyl group to the free amino group of methionyl-tRNA(fMet). The formyl group appears to play a dual role in the initiator identity of N-formylmethionyl-tRNA by promoting its recognition by IF2 and preventing the misappropriation of this tRNA by the elongation apparatus. This chain is Methionyl-tRNA formyltransferase, found in Parabacteroides distasonis (strain ATCC 8503 / DSM 20701 / CIP 104284 / JCM 5825 / NCTC 11152).